Consider the following 900-residue polypeptide: MKWTTDKVRQTWLDYFTAKGHLALPSKSLIPVNDPSLLWINSGVATLKDYFSAKKTPPSKRLANAQICLRVNDIENVGFTSRHQTLFEMLGNFSIGDYFKEEAIGFANDLLVNHYHLDPKRFYITVYQDDELTFNTWLKHGIPASRIIKCDRDRNFWDLGLGPCGPCTEIYYDRGERFDPHKVGEKLFFEDIENDRYVEVWNIVFSQFNNDGNGNYSELAQKNIDTGAGIERLVAILQDAPTNFDTDIFLKLIGIIEQHCKHKYDTNLYFKFDQKLNEAQSAFRIISDHFKAITFTIAEGVLPGPNERSYIVRRLLRRALLACKKLDLDLKFIDPMVDAIISVYGSYYQQLQGKNQVVQQAIWKEVTAFDKTINLGLMLFEKSIAHNALQPQVAFQLYETYGFPIEMIKELVDKRQLQVDWKAVEQLMEQHRLISKQNSNTLSFEKQNEHLVNFKTASEFLYEANEITAKVIGLFDEQYQPVQKLHNQSGYVVFDQTVLYATSGGQRYDEGYCINHSQNDQRVSFQGVFKGPNKQHFHFFLTGSFQLGDKVILVHDGKWRQLVKNNHSLEHLLHAALQNEIDPLIKQDGAFKSAQKATIDFNFSRALTWAELERVEHRIRQIIQQDIQREEIFTDLEGSQKLNAIAYFEEEYSNHELLRVIRFGDFSVELCGGTHVEHTGLIENCFITDYYARGTGRWRIEIISSNETIAAYLNEQNGKLSETINSLHNTLNNIANPALNKQKTALTKQLNHFHLPQVITDLRKCQALLNELKITVNELKTEDFKWKQKQLAEKIKQELLELAKQDKAYVLASFAAVDPKLLSQVAQAVLNQHKNKLFVLLNQFNNSPSFMLLGQDVSKCIQLLKAHFELKGGGSNNFFRGSFNESVDVSKLQAILDTLQ.

The Zn(2+) site is built by His567, His571, Cys671, and His675.

The protein belongs to the class-II aminoacyl-tRNA synthetase family. The cofactor is Zn(2+).

It localises to the cytoplasm. It carries out the reaction tRNA(Ala) + L-alanine + ATP = L-alanyl-tRNA(Ala) + AMP + diphosphate. Its function is as follows. Catalyzes the attachment of alanine to tRNA(Ala) in a two-step reaction: alanine is first activated by ATP to form Ala-AMP and then transferred to the acceptor end of tRNA(Ala). Also edits incorrectly charged Ser-tRNA(Ala) and Gly-tRNA(Ala) via its editing domain. This Mycoplasma pneumoniae (strain ATCC 29342 / M129 / Subtype 1) (Mycoplasmoides pneumoniae) protein is Alanine--tRNA ligase.